The sequence spans 129 residues: MLLDPLADAMSTIKNAENVGKPECIIKPASKLIAMTLKVMADLGYIGEFEFIDDGKSGMFKVKLLGRINRCGVIKPRFAIKVAELEKWERRFLPARNFGVLILSTSQGVMPHTDARARGIGGHLLAYVY.

Belongs to the universal ribosomal protein uS8 family. In terms of assembly, part of the 30S ribosomal subunit.

Its function is as follows. One of the primary rRNA binding proteins, it binds directly to 16S rRNA central domain where it helps coordinate assembly of the platform of the 30S subunit. The sequence is that of Small ribosomal subunit protein uS8 from Methanothrix thermoacetophila (strain DSM 6194 / JCM 14653 / NBRC 101360 / PT) (Methanosaeta thermophila).